Reading from the N-terminus, the 398-residue chain is MRLDLTQPDFKAAIPILKKIEAAGYEAYFVGGSVRDAILGLPIHDVDIASSAYPAEIKRIFKRTADTGIEHGTVMVLDHGTGYEVTTFRTESRYQDFRRPDHVTFVRSLAEDLKRRDFTINALAVRHDGTIIDLFDGLKDLQHHQLRAVGNPHERFHEDALRMMRAVRFESQLGFGIEPATKAAIADNAKLLVHISVERVAAEFNRLLTGIDRRAGLQDFIETRLFAYAPKMAAHETALTQFSQLPDTQLTSLASGWAALIFLLRTQPLVMLKAWKQSNELITLVTQTVKLLQVMPNPTAWDLYQAGEAAVTTASEVQKLLTPDFDQQQLAEAYAALPIHSKKELALTGADLIKAGVRPGPAMGKALNQIEQRVVAGALPNELKKLLPIATEMSQDRL.

ATP-binding residues include Gly-32 and Arg-35. Residues Gly-32 and Arg-35 each contribute to the CTP site. Mg(2+) contacts are provided by Asp-45 and Asp-47. ATP-binding residues include Arg-116, Asp-159, Arg-162, Arg-165, and Arg-168. Residues Arg-116, Asp-159, Arg-162, Arg-165, and Arg-168 each contribute to the CTP site.

This sequence belongs to the tRNA nucleotidyltransferase/poly(A) polymerase family. Bacterial CCA-adding enzyme type 3 subfamily. As to quaternary structure, homodimer. Mg(2+) serves as cofactor.

The catalysed reaction is a tRNA precursor + 2 CTP + ATP = a tRNA with a 3' CCA end + 3 diphosphate. The enzyme catalyses a tRNA with a 3' CCA end + 2 CTP + ATP = a tRNA with a 3' CCACCA end + 3 diphosphate. Its function is as follows. Catalyzes the addition and repair of the essential 3'-terminal CCA sequence in tRNAs without using a nucleic acid template. Adds these three nucleotides in the order of C, C, and A to the tRNA nucleotide-73, using CTP and ATP as substrates and producing inorganic pyrophosphate. tRNA 3'-terminal CCA addition is required both for tRNA processing and repair. Also involved in tRNA surveillance by mediating tandem CCA addition to generate a CCACCA at the 3' terminus of unstable tRNAs. While stable tRNAs receive only 3'-terminal CCA, unstable tRNAs are marked with CCACCA and rapidly degraded. The chain is CCA-adding enzyme from Lacticaseibacillus paracasei (strain ATCC 334 / BCRC 17002 / CCUG 31169 / CIP 107868 / KCTC 3260 / NRRL B-441) (Lactobacillus paracasei).